The sequence spans 228 residues: MKVSYHGHSVVQIETGGKTILIDPFITGNELTDLNADHVEADVILLTHGHNDHVGDTVAIAKRTGALVVAVAELATYMGFQGVENVHPMSIGGAYQFDFGRVKFTQAFHGSSFTEEDSQKIVYTGMPGGILFTAEGKTIYHAGDTALFSDMKLIGERHPIDLAFLPIGDNFTMGPEDAKTATEWIGASLTVPIHYNTFPPIKQDPHAFVTSLQSGEGRVLEVGETIEL.

This sequence belongs to the UPF0173 family.

The sequence is that of UPF0173 metal-dependent hydrolase ABC2731 from Shouchella clausii (strain KSM-K16) (Alkalihalobacillus clausii).